Reading from the N-terminus, the 838-residue chain is MVPLLPLYALLLLFLCDINPANANSYYDKVLAHSRIRGRDQGPNVCALQQILGTKKKYFSSCKNWYQGAICGKKTTVLYECCPGYMRMEGMKGCPAVMPIDHVYGTLGIVGATTTQHYSDVSKLREEIEGKGSYTYFAPSNEAWENLDSDIRRGLENNVNVELLNALHSHMVNKRMLTKDLKHGMVIPSMYNNLGLFINHYPNGVVTVNCARVIHGNQIATNGVVHVIDRVLTQIGTSIQDFLEAEDDLSSFRAAAITSDLLESLGRDGHFTLFAPTNEAFEKLPRGVLERIMGDKVASEALMKYHILNTLQCSEAITGGAVFETMEGNTIEIGCEGDSISINGIKMVNKKDIVTKNGVIHLIDEVLIPDSAKQVIELAGKQQTTFTDLVAQLGLASSLKPDGEYTLLAPVNNAFSDDTLSMDQRLLKLILQNHILKVKVGLSDLYNGQILETIGGKQLRVFVYRTAICIENSCMVRGSKQGRNGAIHIFREIIQPAEKSLHDKLRQDKRFSIFLSLLEAADLKDLLTQPGDWTLFAPTNDAFKGMTSEERELLIGDKNALQNIILYHLTPGVYIGKGFEPGVTNILKTTQGSKIYLKGVNETLLVNELKSKESDIMTTNGVIHVVDKLLYPADIPVGNDQLLELLNKLIKYIQIKFVRGSTFKEIPMTVYTTKIITKVVEPKIKVIQGSLQPIIKTEGPAMTKIQIEGDPDFRLIKEGETVTEVIHGEPVIKKYTKIIDGVPVEITEKQTREERIITGPEIKYTRISTGGGETGETLQKFLQKEVSKVTKFIEGGDGHLFEDEEIKRLLQGDTPAKKIPANKRVQGPRRRSREGRSQ.

Residues 1–23 (MVPLLPLYALLLLFLCDINPANA) form the signal peptide. Residues 42–96 (GPNVCALQQILGTKKKYFSSCKNWYQGAICGKKTTVLYECCPGYMRMEGMKGCPA) form the EMI domain. 5 disulfides stabilise this stretch: Cys46/Cys82, Cys71/Cys335, Cys81/Cys94, Cys210/Cys313, and Cys469/Cys474. Cys62 bears the S-cysteinyl cysteine mark. 4 consecutive FAS1 domains span residues 99–232 (PIDH…DRVL), 236–367 (GTSI…DEVL), 370–494 (DSAK…REII), and 498–630 (EKSL…DKLL). A glycan (N-linked (GlcNAc...) asparagine) is linked at Asn601. Positions 811-838 (QGDTPAKKIPANKRVQGPRRRSREGRSQ) are disordered. Residues 826–838 (QGPRRRSREGRSQ) are compositionally biased toward basic residues.

As to quaternary structure, homodimer. Interacts with BMP1 and fibronectin. In terms of processing, gamma-carboxylation is controversial. Gamma-carboxyglutamated; gamma-carboxyglutamate residues are formed by vitamin K dependent carboxylation; these residues may be required for binding to calcium. According to a more recent report in human, does not contain vitamin K-dependent gamma-carboxyglutamate residues. In terms of tissue distribution, preferentially expressed in periosteum and periodontal ligament. Also expressed in the developing and adult heart.

Its subcellular location is the golgi apparatus. The protein localises to the secreted. The protein resides in the extracellular space. It is found in the extracellular matrix. Its function is as follows. Induces cell attachment and spreading and plays a role in cell adhesion. Enhances incorporation of BMP1 in the fibronectin matrix of connective tissues, and subsequent proteolytic activation of lysyl oxidase LOX. The sequence is that of Periostin (Postn) from Mus musculus (Mouse).